We begin with the raw amino-acid sequence, 636 residues long: Basic helix-loop-helix ARNT-like protein 2 (636 aa).

A disordered region spans residues 25 to 62 (VSSRVSPGTRPTAMGSFSSHMTEFPRKRKGSDSDPSQS). The segment at 46–258 (TEFPRKRKGS…SPREKLIDAK (213 aa)) is interaction with PER2. The Nuclear localization signal signature appears at 49 to 54 (PRKRKG). In terms of domain architecture, bHLH spans 107–160 (AFREAHSQTEKRRRDKMNNLIEELSAMIPQCNPMARKLDKLTVLRMAVQHLRSL). Positions 177 to 187 (LQDNELRHLIL) match the Nuclear export signal 1 motif. Residues 178 to 250 (QDNELRHLIL…EQLSSFDISP (73 aa)) enclose the PAS 1 domain. A Glycyl lysine isopeptide (Lys-Gly) (interchain with G-Cter in SUMO2 and SUMO3) cross-link involves residue Lys-287. Lys-294 participates in a covalent cross-link: Glycyl lysine isopeptide (Lys-Gly) (interchain with G-Cter in SUMO2). Residues 357 to 427 (VPQNSGEINV…DKHKAVLQSK (71 aa)) form the PAS 2 domain. The Nuclear export signal 2 motif lies at 392 to 400 (LGYLPQELL). The region spanning 432 to 475 (TDSYKFRAKDGSFVTLKSQWFSFTNPWTKELEYIVSVNTLVLGH) is the PAC domain.

Component of the circadian core oscillator, which includes the CRY proteins, CLOCK, or NPAS2, BMAL1 or BMAL2, CSNK1D and/or CSNK1E, TIMELESS and the PER proteins. Interacts directly with CLOCK to form the BMAL2-CLOCK transactivator. Can form heterodimers or homodimers which interact directly with CLOCK to form the transcription activator. Interacts with NPAS2 and HIF1A. Interacts with PER2. As to expression, expressed in fetal brain. Highly expressed in brain and placenta. Lower levels in heart, liver, thymus, kidney and lung. Located to endothelial cells and neuronal cells of the suprachiasmatic nucleus (SCN). Also detected in endothelial cells of the heart, lung and kidney. In the brain, specifically expressed in the thalamus, hippocampus and amygdala.

It localises to the nucleus. Functionally, transcriptional activator which forms a core component of the circadian clock. The circadian clock, an internal time-keeping system, regulates various physiological processes through the generation of approximately 24 hour circadian rhythms in gene expression, which are translated into rhythms in metabolism and behavior. It is derived from the Latin roots 'circa' (about) and 'diem' (day) and acts as an important regulator of a wide array of physiological functions including metabolism, sleep, body temperature, blood pressure, endocrine, immune, cardiovascular, and renal function. Consists of two major components: the central clock, residing in the suprachiasmatic nucleus (SCN) of the brain, and the peripheral clocks that are present in nearly every tissue and organ system. Both the central and peripheral clocks can be reset by environmental cues, also known as Zeitgebers (German for 'timegivers'). The predominant Zeitgeber for the central clock is light, which is sensed by retina and signals directly to the SCN. The central clock entrains the peripheral clocks through neuronal and hormonal signals, body temperature and feeding-related cues, aligning all clocks with the external light/dark cycle. Circadian rhythms allow an organism to achieve temporal homeostasis with its environment at the molecular level by regulating gene expression to create a peak of protein expression once every 24 hours to control when a particular physiological process is most active with respect to the solar day. Transcription and translation of core clock components (CLOCK, NPAS2, BMAL1, BMAL2, PER1, PER2, PER3, CRY1 and CRY2) plays a critical role in rhythm generation, whereas delays imposed by post-translational modifications (PTMs) are important for determining the period (tau) of the rhythms (tau refers to the period of a rhythm and is the length, in time, of one complete cycle). A diurnal rhythm is synchronized with the day/night cycle, while the ultradian and infradian rhythms have a period shorter and longer than 24 hours, respectively. Disruptions in the circadian rhythms contribute to the pathology of cardiovascular diseases, cancer, metabolic syndromes and aging. A transcription/translation feedback loop (TTFL) forms the core of the molecular circadian clock mechanism. Transcription factors, CLOCK or NPAS2 and BMAL1 or BMAL2, form the positive limb of the feedback loop, act in the form of a heterodimer and activate the transcription of core clock genes and clock-controlled genes (involved in key metabolic processes), harboring E-box elements (5'-CACGTG-3') within their promoters. The core clock genes: PER1/2/3 and CRY1/2 which are transcriptional repressors form the negative limb of the feedback loop and interact with the CLOCK|NPAS2-BMAL1|BMAL2 heterodimer inhibiting its activity and thereby negatively regulating their own expression. This heterodimer also activates nuclear receptors NR1D1/2 and RORA/B/G, which form a second feedback loop and which activate and repress BMAL1 transcription, respectively. The CLOCK-BMAL2 heterodimer activates the transcription of SERPINE1/PAI1 and BHLHE40/DEC1. This is Basic helix-loop-helix ARNT-like protein 2 from Homo sapiens (Human).